We begin with the raw amino-acid sequence, 128 residues long: Lymphocyte antigen 6D (128 aa).

A signal peptide spans 1–20 (MKTVLLFLVALAAAAGPAQA). Residues 21–108 (LRCHVCTSSS…WQSAAPARTS (88 aa)) enclose the UPAR/Ly6 domain. Intrachain disulfides connect Cys-23–Cys-45, Cys-26–Cys-32, Cys-38–Cys-63, Cys-67–Cys-86, and Cys-87–Cys-92. Ser-98 carries the GPI-anchor amidated serine lipid modification. Positions 99–128 (WQSAAPARTSAHLGLALACGLLALLWAPGL) are cleaved as a propeptide — removed in mature form.

It localises to the cell membrane. In terms of biological role, may act as a specification marker at earliest stage specification of lymphocytes between B- and T-cell development. Marks the earliest stage of B-cell specification. This is Lymphocyte antigen 6D (LY6D) from Bos taurus (Bovine).